The sequence spans 232 residues: Small ribosomal subunit protein uS3 (232 aa).

The region spanning 39–107 (VRQFLTKELA…PAQINIAEVR (69 aa)) is the KH type-2 domain.

The protein belongs to the universal ribosomal protein uS3 family. In terms of assembly, part of the 30S ribosomal subunit. Forms a tight complex with proteins S10 and S14.

Functionally, binds the lower part of the 30S subunit head. Binds mRNA in the 70S ribosome, positioning it for translation. In Erwinia tasmaniensis (strain DSM 17950 / CFBP 7177 / CIP 109463 / NCPPB 4357 / Et1/99), this protein is Small ribosomal subunit protein uS3.